Here is a 600-residue protein sequence, read N- to C-terminus: Copine-A (600 aa).

2 consecutive C2 domains span residues 1 to 111 (MNLK…TVCL) and 116 to 246 (KSGK…NVIN). Ca(2+) contacts are provided by Asp-23, Asp-29, Asp-82, Asp-84, Asp-89, Asp-151, Asp-158, Asp-215, Asp-217, and Asp-223. The VWFA domain maps to 286 to 503 (NLIVGIDCTA…ELAAEVLREI (218 aa)). Positions 535–549 (YDNPTTTTTATSPST) are enriched in low complexity. Positions 535 to 583 (YDNPTTTTTATSPSTGIDLNKGSNVGLNLTKTESSPSPSGGAGIDLNKG) are disordered. The segment covering 555–572 (KGSNVGLNLTKTESSPSP) has biased composition (polar residues).

This sequence belongs to the copine family. Requires Ca(2+) as cofactor.

Its subcellular location is the cytoplasm. It localises to the membrane. Required for cytokinesis, contractile vacuole function and development. This chain is Copine-A (cpnA), found in Dictyostelium discoideum (Social amoeba).